Here is a 441-residue protein sequence, read N- to C-terminus: AP-2 complex subunit mu (441 aa).

The MHD domain maps to 174–440; that stretch reads RNELFLDVIE…IGRSGLYETR (267 aa).

The protein belongs to the adapter complexes medium subunit family. As to quaternary structure, adapter protein complex 2 (AP-2) is a heterotetramer composed of two large adaptins (alpha-type subunit and beta-type subunits), a medium adaptin (mu-type subunit AP50) and a small adaptin (sigma-type subunit AP17). Brain, heart, lung, liver, testis and spleen.

It localises to the cell membrane. Its subcellular location is the membrane. The protein resides in the coated pit. Its function is as follows. Component of the adapter complexes which link clathrin to receptors in coated vesicles. Clathrin-associated protein complexes are believed to interact with the cytoplasmic tails of membrane proteins, leading to their selection and concentration. AP50 is a subunit of the plasma membrane adapter. Essential wnt/egl-20 signaling protein that functions in wnt/egl-20-producing cells. Required for the AP-2 complex-mediated endocytosis of membrane proteins including wntless homolog mig-14 in egl-20-producing cells. During development, regulates the migration of HSN neurons and the left and right Q neuroblasts (QL and QR, respectively) and their descendants, possibly through hox gene and wnt/egl-20 gene target mab-5, and plays a role in establishing ALM and PLM neuronal cell polarity. Regulates AWB sensory neuron cilia membrane expansion during development, potentially via localization of tub-1 and PtdIns(4,5)P2 to the ciliary base. Required for the asymmetric divisions of V5 cells. The polypeptide is AP-2 complex subunit mu (dpy-23) (Caenorhabditis elegans).